The sequence spans 115 residues: NADH-ubiquinone oxidoreductase chain 3 (115 aa).

3 helical membrane-spanning segments follow: residues 3–23, 55–75, and 84–104; these read VMLA…IAFW, FFLV…LLPL, and LPTM…SLAY.

It belongs to the complex I subunit 3 family. In terms of assembly, core subunit of respiratory chain NADH dehydrogenase (Complex I) which is composed of 45 different subunits. Interacts with TMEM186. Interacts with TMEM242.

The protein resides in the mitochondrion inner membrane. It carries out the reaction a ubiquinone + NADH + 5 H(+)(in) = a ubiquinol + NAD(+) + 4 H(+)(out). In terms of biological role, core subunit of the mitochondrial membrane respiratory chain NADH dehydrogenase (Complex I) which catalyzes electron transfer from NADH through the respiratory chain, using ubiquinone as an electron acceptor. Essential for the catalytic activity of complex I. The sequence is that of NADH-ubiquinone oxidoreductase chain 3 from Felis catus (Cat).